The sequence spans 1007 residues: Probable beta-galactosidase A (1007 aa).

The signal sequence occupies residues methionine 1–glycine 18. The substrate site is built by tyrosine 96, asparagine 140, alanine 141, and glutamate 142. N-linked (GlcNAc...) asparagine glycosylation occurs at asparagine 156. Asparagine 199 contributes to the substrate binding site. Glutamate 200 acts as the Proton donor in catalysis. A disulfide bridge links cysteine 205 with cysteine 206. A substrate-binding site is contributed by tyrosine 260. Cysteine 266 and cysteine 315 are joined by a disulfide. Glutamate 298 (nucleophile) is an active-site residue. Tyrosine 364 contacts substrate. Residues asparagine 373, asparagine 402, asparagine 422, asparagine 478, asparagine 522, asparagine 622, asparagine 739, asparagine 760, asparagine 777, and asparagine 805 are each glycosylated (N-linked (GlcNAc...) asparagine). The interval arginine 862–leucine 881 is disordered. Residue asparagine 914 is glycosylated (N-linked (GlcNAc...) asparagine).

This sequence belongs to the glycosyl hydrolase 35 family.

The protein resides in the secreted. It carries out the reaction Hydrolysis of terminal non-reducing beta-D-galactose residues in beta-D-galactosides.. In terms of biological role, cleaves beta-linked terminal galactosyl residues from gangliosides, glycoproteins, and glycosaminoglycans. In Aspergillus phoenicis (Aspergillus saitoi), this protein is Probable beta-galactosidase A (lacA).